The chain runs to 202 residues: ATP-dependent Clp protease proteolytic subunit (202 aa).

Catalysis depends on serine 98, which acts as the Nucleophile. The active site involves histidine 123.

It belongs to the peptidase S14 family. Fourteen ClpP subunits assemble into 2 heptameric rings which stack back to back to give a disk-like structure with a central cavity, resembling the structure of eukaryotic proteasomes.

Its subcellular location is the cytoplasm. The enzyme catalyses Hydrolysis of proteins to small peptides in the presence of ATP and magnesium. alpha-casein is the usual test substrate. In the absence of ATP, only oligopeptides shorter than five residues are hydrolyzed (such as succinyl-Leu-Tyr-|-NHMec, and Leu-Tyr-Leu-|-Tyr-Trp, in which cleavage of the -Tyr-|-Leu- and -Tyr-|-Trp bonds also occurs).. Its function is as follows. Cleaves peptides in various proteins in a process that requires ATP hydrolysis. Has a chymotrypsin-like activity. Plays a major role in the degradation of misfolded proteins. The sequence is that of ATP-dependent Clp protease proteolytic subunit from Magnetococcus marinus (strain ATCC BAA-1437 / JCM 17883 / MC-1).